Reading from the N-terminus, the 385-residue chain is Calcium/calmodulin-dependent protein kinase type 1D (385 aa).

Residues 23-279 (FEFKETLGTG…CEQAARHPWI (257 aa)) enclose the Protein kinase domain. Residues 29-37 (LGTGAFSEV) and Lys-52 contribute to the ATP site. A Glycyl lysine isopeptide (Lys-Gly) (interchain with G-Cter in SUMO2) cross-link involves residue Lys-113. Position 122 is a phosphoserine (Ser-122). The active-site Proton acceptor is Asp-144. Thr-180 bears the Phosphothreonine; by CaMKK1 and CaMKK2 mark. Residues 279–319 (IAGDTALSKNIHESVSAQIRKNFAKSKWRQAFNATAVVRHM) form an autoinhibitory domain region. The tract at residues 299-320 (KNFAKSKWRQAFNATAVVRHMR) is calmodulin-binding. The short motif at 318 to 324 (HMRRLQL) is the Nuclear export signal element. The tract at residues 363–385 (VAGVGAERRPRPTTVTTGHTGSK) is disordered. Over residues 375 to 385 (TTVTTGHTGSK) the composition is skewed to polar residues.

It belongs to the protein kinase superfamily. CAMK Ser/Thr protein kinase family. CaMK subfamily. As to expression, expressed ubiquitously with high levels in brain and low levels in kidney. Isoform 2 is highly expressed in brain compared to other tissues. In hematopoietic cell lines predominant expression was detected in T and EC cells.

It is found in the cytoplasm. It localises to the nucleus. It catalyses the reaction L-seryl-[protein] + ATP = O-phospho-L-seryl-[protein] + ADP + H(+). It carries out the reaction L-threonyl-[protein] + ATP = O-phospho-L-threonyl-[protein] + ADP + H(+). Its activity is regulated as follows. Activated by Ca(2+)/calmodulin. Binding of calmodulin results in conformational change that relieves intrasteric autoinhibition and allows phosphorylation of Thr-180 within the activation loop by CaMKK1 or CaMKK2. Phosphorylation of Thr-180 results in several fold increase in total activity. Unlike CaMK4, may be unable to exhibit autonomous activity after Ca(2+)/calmodulin activation. In terms of biological role, calcium/calmodulin-dependent protein kinase that operates in the calcium-triggered CaMKK-CaMK1 signaling cascade and, upon calcium influx, activates CREB-dependent gene transcription, regulates calcium-mediated granulocyte function and respiratory burst and promotes basal dendritic growth of hippocampal neurons. In neutrophil cells, required for cytokine-induced proliferative responses and activation of the respiratory burst. Activates the transcription factor CREB1 in hippocampal neuron nuclei. May play a role in apoptosis of erythroleukemia cells. In vitro, phosphorylates transcription factor CREM isoform Beta. Isoform 1 but not isoform 2 activates CREB1. The chain is Calcium/calmodulin-dependent protein kinase type 1D (Camk1d) from Mus musculus (Mouse).